A 388-amino-acid chain; its full sequence is Phosphopentomutase (388 aa).

Aspartate 11, aspartate 283, histidine 288, aspartate 324, histidine 325, and histidine 336 together coordinate Mn(2+).

It belongs to the phosphopentomutase family. Mn(2+) serves as cofactor.

The protein localises to the cytoplasm. The catalysed reaction is 2-deoxy-alpha-D-ribose 1-phosphate = 2-deoxy-D-ribose 5-phosphate. It catalyses the reaction alpha-D-ribose 1-phosphate = D-ribose 5-phosphate. The protein operates within carbohydrate degradation; 2-deoxy-D-ribose 1-phosphate degradation; D-glyceraldehyde 3-phosphate and acetaldehyde from 2-deoxy-alpha-D-ribose 1-phosphate: step 1/2. Its function is as follows. Isomerase that catalyzes the conversion of deoxy-ribose 1-phosphate (dRib-1-P) and ribose 1-phosphate (Rib-1-P) to deoxy-ribose 5-phosphate (dRib-5-P) and ribose 5-phosphate (Rib-5-P), respectively. This Anaeromyxobacter sp. (strain K) protein is Phosphopentomutase.